The following is a 653-amino-acid chain: Eukaryotic translation initiation factor 4E-binding protein Mextli (653 aa).

A KH domain is found at 227–292 (YCKDEVVIRN…DKINYAKQLM (66 aa)). 2 disordered regions span residues 311 to 335 (VGGSCSSLNSSNSDDAIVQPRTPTG) and 515 to 570 (EGDD…AGTN). 2 stretches are compositionally biased toward low complexity: residues 314–323 (SCSSLNSSNS) and 525–536 (SNGGSSTSNQNG). Residues 546–563 (SRKESTPETKGAREKGDL) show a composition bias toward basic and acidic residues.

As to quaternary structure, interacts with eukaryotic translation initiation factor eIF4E1. Also interacts with eukaryotic translation initiation factor 3 complex members eif3-S9/eif3b, Int6/eif3e and eIF-3p40/eif3h and with CG3225.

The protein resides in the cytoplasm. The protein localises to the cytoplasmic ribonucleoprotein granule. Functionally, plays a role in promoting translation. The sequence is that of Eukaryotic translation initiation factor 4E-binding protein Mextli from Drosophila melanogaster (Fruit fly).